Consider the following 353-residue polypeptide: Photosystem II protein D1 (353 aa).

N-acetylthreonine is present on threonine 2. The residue at position 2 (threonine 2) is a Phosphothreonine. A run of 3 helical transmembrane segments spans residues 29 to 46, 118 to 133, and 142 to 156; these read YIGW…TATS, HFLL…EWEL, and WIAV…AATA. Residue histidine 118 coordinates chlorophyll a. Tyrosine 126 is a binding site for pheophytin a. Residues aspartate 170 and glutamate 189 each contribute to the [CaMn4O5] cluster site. A helical membrane pass occupies residues 197 to 218; the sequence is FHMLGVAGVFGGSLFSAMHGSL. Residue histidine 198 coordinates chlorophyll a. A quinone is bound at residue histidine 215. Fe cation-binding residues include histidine 215 and histidine 272. The helical transmembrane segment at 274 to 288 threads the bilayer; it reads FLAAWPVVGIWFTAL. The [CaMn4O5] cluster site is built by histidine 332, glutamate 333, aspartate 342, and alanine 344. A propeptide spanning residues 345–353 is cleaved from the precursor; that stretch reads AVEAPSING.

The protein belongs to the reaction center PufL/M/PsbA/D family. As to quaternary structure, PSII is composed of 1 copy each of membrane proteins PsbA, PsbB, PsbC, PsbD, PsbE, PsbF, PsbH, PsbI, PsbJ, PsbK, PsbL, PsbM, PsbT, PsbX, PsbY, PsbZ, Psb30/Ycf12, at least 3 peripheral proteins of the oxygen-evolving complex and a large number of cofactors. It forms dimeric complexes. The cofactor is The D1/D2 heterodimer binds P680, chlorophylls that are the primary electron donor of PSII, and subsequent electron acceptors. It shares a non-heme iron and each subunit binds pheophytin, quinone, additional chlorophylls, carotenoids and lipids. D1 provides most of the ligands for the Mn4-Ca-O5 cluster of the oxygen-evolving complex (OEC). There is also a Cl(-1) ion associated with D1 and D2, which is required for oxygen evolution. The PSII complex binds additional chlorophylls, carotenoids and specific lipids.. In terms of processing, tyr-161 forms a radical intermediate that is referred to as redox-active TyrZ, YZ or Y-Z. Post-translationally, C-terminally processed by CTPA; processing is essential to allow assembly of the oxygen-evolving complex and thus photosynthetic growth.

The protein localises to the plastid. It localises to the chloroplast thylakoid membrane. It catalyses the reaction 2 a plastoquinone + 4 hnu + 2 H2O = 2 a plastoquinol + O2. Its function is as follows. Photosystem II (PSII) is a light-driven water:plastoquinone oxidoreductase that uses light energy to abstract electrons from H(2)O, generating O(2) and a proton gradient subsequently used for ATP formation. It consists of a core antenna complex that captures photons, and an electron transfer chain that converts photonic excitation into a charge separation. The D1/D2 (PsbA/PsbD) reaction center heterodimer binds P680, the primary electron donor of PSII as well as several subsequent electron acceptors. This is Photosystem II protein D1 from Brassica napus (Rape).